Here is a 730-residue protein sequence, read N- to C-terminus: Polyribonucleotide nucleotidyltransferase (730 aa).

Residues aspartate 494 and aspartate 500 each coordinate Mg(2+). The region spanning 561–622 (PRIQTIQIDP…EAMNRAIQEI (62 aa)) is the KH domain. The S1 motif domain maps to 642 to 711 (GKIYTGRVTG…RSGKVRLSRK (70 aa)).

The protein belongs to the polyribonucleotide nucleotidyltransferase family. It depends on Mg(2+) as a cofactor.

The protein resides in the cytoplasm. The catalysed reaction is RNA(n+1) + phosphate = RNA(n) + a ribonucleoside 5'-diphosphate. Its function is as follows. Involved in mRNA degradation. Catalyzes the phosphorolysis of single-stranded polyribonucleotides processively in the 3'- to 5'-direction. This chain is Polyribonucleotide nucleotidyltransferase, found in Opitutus terrae (strain DSM 11246 / JCM 15787 / PB90-1).